Reading from the N-terminus, the 492-residue chain is Putative protein disulfide-isomerase C1F5.02 (492 aa).

The signal sequence occupies residues 1 to 22; sequence MKISNLLAAFLAFSGGFFCASA. Residues 23–128 enclose the Thioredoxin 1 domain; sequence EVPKVNKEGL…LVKYMRKQLL (106 aa). Active-site nucleophile residues include Cys-51 and Cys-54. Residues Cys-51 and Cys-54 are joined by a disulfide bond. Asn-161 and Asn-257 each carry an N-linked (GlcNAc...) asparagine glycan. The Thioredoxin 2 domain occupies 323 to 462; it reads ELTAKAMTKF…LSAFIDKHAS (140 aa). Active-site nucleophile residues include Cys-385 and Cys-388. A disulfide bridge connects residues Cys-385 and Cys-388. The tract at residues 468–492 is disordered; it reads KEKESVPAPDLEDQVAVEDEMADEL. The segment covering 477 to 492 has biased composition (acidic residues); the sequence is DLEDQVAVEDEMADEL. The Prevents secretion from ER motif lies at 489–492; it reads ADEL.

This sequence belongs to the protein disulfide isomerase family.

Its subcellular location is the endoplasmic reticulum lumen. It catalyses the reaction Catalyzes the rearrangement of -S-S- bonds in proteins.. Its function is as follows. Participates in the folding of proteins containing disulfide bonds, may be involved in glycosylation, prolyl hydroxylation and triglyceride transfer. The sequence is that of Putative protein disulfide-isomerase C1F5.02 from Schizosaccharomyces pombe (strain 972 / ATCC 24843) (Fission yeast).